We begin with the raw amino-acid sequence, 52 residues long: uncharacterized protein (52 aa).

Residues 3 to 46 (KIQLESSNQSVLKLEERRLNLTAEIERIYGQMDLKRKELENANL) are a coiled coil.

This is an uncharacterized protein from Dictyostelium discoideum (Social amoeba).